The chain runs to 356 residues: NADH-quinone oxidoreductase subunit H (356 aa).

9 consecutive transmembrane segments (helical) span residues 16-36 (IAVL…AFLL), 52-72 (PNVV…KFVF), 85-105 (LYLL…AVVP), 117-137 (VGIL…IIGG), 163-183 (IGFI…SEII), 201-221 (WPMP…ISAL), 254-274 (FMVG…ILFF), 295-315 (AWYF…FAMV), and 334-354 (IFLP…VYGP).

Belongs to the complex I subunit 1 family. As to quaternary structure, NDH-1 is composed of 14 different subunits. Subunits NuoA, H, J, K, L, M, N constitute the membrane sector of the complex.

The protein localises to the cell inner membrane. It carries out the reaction a quinone + NADH + 5 H(+)(in) = a quinol + NAD(+) + 4 H(+)(out). Its function is as follows. NDH-1 shuttles electrons from NADH, via FMN and iron-sulfur (Fe-S) centers, to quinones in the respiratory chain. The immediate electron acceptor for the enzyme in this species is believed to be ubiquinone. Couples the redox reaction to proton translocation (for every two electrons transferred, four hydrogen ions are translocated across the cytoplasmic membrane), and thus conserves the redox energy in a proton gradient. This subunit may bind ubiquinone. This is NADH-quinone oxidoreductase subunit H from Maricaulis maris (strain MCS10) (Caulobacter maris).